We begin with the raw amino-acid sequence, 191 residues long: MAAERERGGRERSRDREERDSEFVDKLVHINRVAKVVKGGKRFGFAALVVIGDQKGRVGFGHGKAREVPEAIRKATEAAKRNLTRVALREGRTLHHDIAGRHGAGRVYLRAAPAGTGIIAGGPMRAVFETLGIQDVVAKSIGSSNPYNMVRATFDALKHVDSPRSVAARRNIKVSTLQARRVGGDAEVVAE.

Residues Met1–Asp20 are disordered. In terms of domain architecture, S5 DRBM spans Phe23–Val86.

It belongs to the universal ribosomal protein uS5 family. Part of the 30S ribosomal subunit. Contacts proteins S4 and S8.

Its function is as follows. With S4 and S12 plays an important role in translational accuracy. Located at the back of the 30S subunit body where it stabilizes the conformation of the head with respect to the body. In Rhodopseudomonas palustris (strain HaA2), this protein is Small ribosomal subunit protein uS5.